Consider the following 328-residue polypeptide: Carbonic anhydrase-related protein 11 (328 aa).

The first 22 residues, 1–22, serve as a signal peptide directing secretion; the sequence is MGAAARLSAPRALVLWAALGAA. The 271-residue stretch at 33–303 folds into the Alpha-carbonic anhydrase domain; it reads DWWSYKDNLQ…LAHRALRGNR (271 aa). Residues Asn118, Asn170, and Asn260 are each glycosylated (N-linked (GlcNAc...) asparagine). The disordered stretch occupies residues 300 to 328; it reads RGNRDPRHPERRCRGPNYRLHVDGAPHGR. Over residues 319–328 the composition is skewed to basic and acidic residues; the sequence is LHVDGAPHGR.

It belongs to the alpha-carbonic anhydrase family.

The protein resides in the secreted. Functionally, does not have a catalytic activity. This chain is Carbonic anhydrase-related protein 11 (CA11), found in Bos taurus (Bovine).